The sequence spans 219 residues: Small ribosomal subunit protein uS3 (219 aa).

The 69-residue stretch at 38 to 106 (IRKYINTKLA…KVHINIVEIK (69 aa)) folds into the KH type-2 domain.

Belongs to the universal ribosomal protein uS3 family. As to quaternary structure, part of the 30S ribosomal subunit. Forms a tight complex with proteins S10 and S14.

Binds the lower part of the 30S subunit head. Binds mRNA in the 70S ribosome, positioning it for translation. In Latilactobacillus sakei subsp. sakei (strain 23K) (Lactobacillus sakei subsp. sakei), this protein is Small ribosomal subunit protein uS3.